The primary structure comprises 427 residues: Adenylosuccinate synthetase (427 aa).

GTP is bound by residues 12–18 and 40–42; these read GDEGKGK and GHT. The active-site Proton acceptor is the Asp-13. Positions 13 and 40 each coordinate Mg(2+). IMP contacts are provided by residues 13–16, 38–41, Thr-128, Arg-142, Gln-223, Thr-238, and Arg-302; these read DEGK and NAGH. His-41 serves as the catalytic Proton donor. 298–304 contributes to the substrate binding site; the sequence is TTTGRPR. GTP contacts are provided by residues Arg-304, 330 to 332, and 412 to 414; these read SID and SVG.

The protein belongs to the adenylosuccinate synthetase family. In terms of assembly, homodimer. The cofactor is Mg(2+).

It is found in the cytoplasm. The enzyme catalyses IMP + L-aspartate + GTP = N(6)-(1,2-dicarboxyethyl)-AMP + GDP + phosphate + 2 H(+). It participates in purine metabolism; AMP biosynthesis via de novo pathway; AMP from IMP: step 1/2. Functionally, plays an important role in the de novo pathway of purine nucleotide biosynthesis. Catalyzes the first committed step in the biosynthesis of AMP from IMP. The protein is Adenylosuccinate synthetase of Staphylococcus epidermidis (strain ATCC 35984 / DSM 28319 / BCRC 17069 / CCUG 31568 / BM 3577 / RP62A).